A 3914-amino-acid polypeptide reads, in one-letter code: Trichosetin synthetase PKS-NRPS1 (3914 aa).

Positions 4–420 (NEPIAIIGSA…GTNAHAIIEA (417 aa)) constitute a Ketosynthase family 3 (KS3) domain. Catalysis depends on for beta-ketoacyl synthase activity residues Cys-177, His-301, and His-340. The segment at 525–847 (VLTGQGAQWP…REKDDIQQFA (323 aa)) is malonyl-CoA:ACP transacylase (MAT) domain. The tract at residues 913–1047 (HPILGRRCHD…AHVKASLSVP (135 aa)) is N-terminal hotdog fold. The segment at 913–1214 (HPILGRRCHD…MELVPFSPAT (302 aa)) is dehydratase (DH) domain. One can recognise a PKS/mFAS DH domain in the interval 913-1216 (HPILGRRCHD…LVPFSPATPE (304 aa)). His-946 functions as the Proton acceptor; for dehydratase activity in the catalytic mechanism. Positions 1062–1216 (LRKVEVDRFY…LVPFSPATPE (155 aa)) are C-terminal hotdog fold. Asp-1122 serves as the catalytic Proton donor; for dehydratase activity. Positions 1364–1593 (EGFGLDLVNK…DLPETKSTEL (230 aa)) are methyltransferase (MT) domain. The tract at residues 2083–2255 (TFLLIGLSGE…VAASSIDISS (173 aa)) is ketoreductase (KR) domain. Positions 2356–2436 (LADVKTKADA…DLIEESLNLI (81 aa)) constitute a Carrier 1 domain. Ser-2396 carries the O-(pantetheine 4'-phosphoryl)serine modification. A disordered region spans residues 2447–2518 (EAGSTPTTQP…DSTDNSTPLK (72 aa)). Residues 2481–2500 (QQTGSDSSRSPIDTPLTSME) show a composition bias toward polar residues. The condensation (C) domain stretch occupies residues 2529–2956 (SYGQAGFWFL…VQGTNKAADT (428 aa)). Residues 2991-3388 (QTIQANSTKV…LLFCDGRLED (398 aa)) form an adenylation (A) (KR) domain region. The 78-residue stretch at 3502-3579 (GTLTVAEQRL…TMAVVLESCG (78 aa)) folds into the Carrier 2 domain. The residue at position 3539 (Ser-3539) is an O-(pantetheine 4'-phosphoryl)serine. Positions 3615–3831 (LTGSAGYLGR…VLPTGDIVKA (217 aa)) are reductase (RED) domain.

In the C-terminal section; belongs to the NRP synthetase family.

It catalyses the reaction L-serine + 7 malonyl-CoA + acetyl-CoA + 2 S-adenosyl-L-methionine + ATP + 8 NADPH + 11 H(+) = (5S)-3-[(2E,6R,8E,10E,12E)-2,6-dimethyltetradeca-2,8,10,12-tetraenoyl]-5-(hydroxymethyl)pyrrolidine-2,4-dione + AMP + 2 S-adenosyl-L-homocysteine + 7 CO2 + diphosphate + 8 NADP(+) + 8 CoA + 6 H2O. It functions in the pathway mycotoxin biosynthesis. Functionally, hybrid PKS-NRPS synthetase; part of the gene cluster that mediates the biosynthesis of trichosetin, a trans-fused decalin-containing tetramic acid with antimicrobial activity. The PKS module of PKS-NRPS1 together with the enoylreductase (ER) catalyze the formation of the polyketide unit which is then conjugated to L-serine by the condensation domain of the PKS-NRPS1 NRPS module. Activity of the Dieckmann cyclase domain (RED) results in release of the Dieckmann product intermediate. Diels-Alderase (DA) is involved in endo-selective Diels-Alder cycloaddition to form the decalin ring, leading to the production of N-desmethylequisetin also called trichosetin. The cluster does not contain the equisetin N-methyltransferase and consequently, trichosetin is isolated as final product. The chain is Trichosetin synthetase PKS-NRPS1 from Gibberella fujikuroi (strain CBS 195.34 / IMI 58289 / NRRL A-6831) (Bakanae and foot rot disease fungus).